Consider the following 495-residue polypeptide: ATP synthase subunit beta, chloroplastic (495 aa).

172-179 contacts ATP; the sequence is GGAGVGKT.

It belongs to the ATPase alpha/beta chains family. In terms of assembly, F-type ATPases have 2 components, CF(1) - the catalytic core - and CF(0) - the membrane proton channel. CF(1) has five subunits: alpha(3), beta(3), gamma(1), delta(1), epsilon(1). CF(0) has four main subunits: a(1), b(1), b'(1) and c(9-12).

It is found in the plastid. Its subcellular location is the chloroplast thylakoid membrane. It carries out the reaction ATP + H2O + 4 H(+)(in) = ADP + phosphate + 5 H(+)(out). Produces ATP from ADP in the presence of a proton gradient across the membrane. The catalytic sites are hosted primarily by the beta subunits. The sequence is that of ATP synthase subunit beta, chloroplastic from Scilla messeniaca (Greek squill).